Consider the following 271-residue polypeptide: 2,3,4,5-tetrahydropyridine-2,6-dicarboxylate N-succinyltransferase (271 aa).

Residues R102 and D139 each contribute to the substrate site.

It belongs to the transferase hexapeptide repeat family. In terms of assembly, homotrimer.

It localises to the cytoplasm. It carries out the reaction (S)-2,3,4,5-tetrahydrodipicolinate + succinyl-CoA + H2O = (S)-2-succinylamino-6-oxoheptanedioate + CoA. Its pathway is amino-acid biosynthesis; L-lysine biosynthesis via DAP pathway; LL-2,6-diaminopimelate from (S)-tetrahydrodipicolinate (succinylase route): step 1/3. The protein is 2,3,4,5-tetrahydropyridine-2,6-dicarboxylate N-succinyltransferase of Coxiella burnetii (strain Dugway 5J108-111).